The following is a 199-amino-acid chain: Putative pseudouridine methyltransferase (199 aa).

The S-adenosyl-L-methionine site is built by methionine 132 and cysteine 186.

This sequence belongs to the methyltransferase superfamily. TrmY family.

The protein resides in the cytoplasm. This Vibrio atlanticus (strain LGP32) (Vibrio splendidus (strain Mel32)) protein is Putative pseudouridine methyltransferase.